A 319-amino-acid chain; its full sequence is Sphingomyelinase D (319 aa).

The signal sequence occupies residues 1–23; the sequence is MTPLLRTICAILCILIAVPLTFA. H44 is a catalytic residue. Mg(2+) is bound by residues E64, D66, and D109. The short motif at 312–319 is the SMD-tail element; that stretch reads ATGADKPW.

It belongs to the sphingomyelinase D/phospholipase D family. It depends on Mg(2+) as a cofactor.

The protein localises to the secreted. The enzyme catalyses a sphingomyelin + H2O = an N-acylsphing-4-enine 1-phosphate + choline + H(+). Functionally, catalyzes the hydrolysis of sphingomyelin. Sphingomyelinases D are produced by some spider in their venoms, but also by arthropods such as ticks, or pathogenic bacteria and fungi. They might play a role in pathogenicity through different mechanisms, such as membrane destabilization and host cell penetration, but also pulmonary inflammation and cutaneous lesions. The protein is Sphingomyelinase D of Ajellomyces capsulatus (strain G186AR / H82 / ATCC MYA-2454 / RMSCC 2432) (Darling's disease fungus).